Here is a 541-residue protein sequence, read N- to C-terminus: Membrane protein insertase YidC (541 aa).

Transmembrane regions (helical) follow at residues 6-26 (NILLIGLLFVSFLLWQQWQAD), 325-345 (LVVDYGFLWWLAVPIHWLLMF), 349-369 (FVGNWGLAIILITLTVRGLLF), 420-440 (GGCLPIILQMPIFIALYWVLL), 457-477 (LSVQDPYYILPLLMGVSMFVM), and 500-520 (VIFTVFFLWFPAGLVLYWLVG).

It belongs to the OXA1/ALB3/YidC family. Type 1 subfamily. Interacts with the Sec translocase complex via SecD. Specifically interacts with transmembrane segments of nascent integral membrane proteins during membrane integration.

The protein resides in the cell inner membrane. Required for the insertion and/or proper folding and/or complex formation of integral membrane proteins into the membrane. Involved in integration of membrane proteins that insert both dependently and independently of the Sec translocase complex, as well as at least some lipoproteins. Aids folding of multispanning membrane proteins. This Shewanella baltica (strain OS195) protein is Membrane protein insertase YidC.